We begin with the raw amino-acid sequence, 1170 residues long: MGRSYNEKDFEYHRHTFHHTHHPLSTHLPPQRFRKRVLSMDRRRKRKRKKKKTSMPPSDVTPTIHEVDEEEAESEIEGQCQAATPTEPSEELPQLSLGSEEDLAADLPLSSFHMESERPASSEETLPSPASMEEKEETQQPPDGGEHKDISNSFSPSPEAASMTTRGWFRRKPVHRLAGAQRTSYDLRERICIGSMTAMETAVYQKVPTDEAEAQMLASADLDDMKSHRFEDNPGVRRHLVKKSSRCQLPRSSNGSPPLSSLKRRKRMDKKTHEVFVELNELIVDKNQEMRWKERARWIKFEEDVEEETDRWGKPHVASLSFRSLLELRRTITHGAIMLDLDQSTLPGIAHLMVETMIISDQIRAEDRANVLRALLLKHSHPNDEKEGLFHRNHSVTSLGSFRHNHNHVHDTSLPLVSQDHEEMHDSKAAEHDKEKSLHPIPAEGHAASRSLKLLAKIPKDAEATVVLVGCVEFLEKPAMAFVRLNESILLESILEVPVPIRFIFVLLGPTQTNVDYHEIGRSFSTLMSDKNFHEVAYFADDRQDLLNGINEFLDCSIVIPPSDVEGKDLLKTVASFQKQMLRKRKERELKKCASTVTGAELETKDVNIEEQEEEDQFDVDPLKRSGIPFGGLIHDIRRRYPRYISDLKDALDTQCIAAVIFIYFAALSPTITFGGLLGEKTQGMMGVSELIISTATVGVLFSLLAGQPLLIIGFSGPLLVFEEAFYKFCQAQGFEYLTGRVWIGFWLIFIVLVIVAAEGSFLVRYISPFTQEIFAFLISLIFIYETFSKLIKVFQEHPLMMSYTSAAFKHSDQRGSSVIGEPILNQPNTALLSMVLMMGTFFTAFFLRKLRNSRFLGGKVRRVIGDFGIPISILISVLVDILIPDTYTQKLNVPSGFSVTSPDKRGWFISPFGDKQPFPVWMMGASVIPALLVFILIFMETQITTLIVSKKERRLMKGSGFHLDLLLIVTLGAICPLFGLPWLTAATVRSVTHVNALTVMSKATAPGEKPMIQEVKEQRVTGMCVAILVGLSIVMTDVLRHIPLAVLFGIFLYMGITSLTGIQLYERITLMVTPAKHHPDHVYVTKVKTWRMNMFTVIQLLCIVLLWVVKSTVASLAFPFILIMTVPLRRLILTRIFEERELAALDADEDSPNFDEDGRDEYNEIHMLV.

Over 1–656 the chain is Cytoplasmic; that stretch reads MGRSYNEKDF…DLKDALDTQC (656 aa). Disordered regions lie at residues 17–96, 112–167, and 239–267; these read FHHT…PQLS, FHME…TTRG, and HLVK…RRKR. The segment covering 32 to 53 has biased composition (basic residues); sequence RFRKRVLSMDRRRKRKRKKKKT. Positions 67–76 are enriched in acidic residues; that stretch reads VDEEEAESEI. Residues 246-259 show a composition bias toward polar residues; the sequence is RCQLPRSSNGSPPL. A run of 5 helical transmembrane segments spans residues 657–677, 702–722, 744–764, 774–794, and 828–848; these read IAAV…FGGL, FSLL…LLVF, IGFW…SFLV, IFAF…LIKV, and PNTA…AFFL. Residues 657–1170 form a membrane (anion exchange) region; sequence IAAVIFIYFA…DEYNEIHMLV (514 aa). Topologically, residues 849 to 863 are cytoplasmic; the sequence is RKLRNSRFLGGKVRR. 5 helical membrane passes run 864–884, 919–939, 966–986, 1020–1063, and 1104–1124; these read VIGD…DILI, FPVW…ILIF, LLLI…WLTA, RVTG…LTGI, and IVLL…FILI.

The protein belongs to the anion exchanger (TC 2.A.31) family. As to expression, widely expressed at low levels.

It localises to the cell membrane. The catalysed reaction is hydrogencarbonate(in) + chloride(out) = hydrogencarbonate(out) + chloride(in). In terms of biological role, sodium-independent anion exchanger which mediates the electroneutral exchange of chloride for bicarbonate ions across the cell membrane. May be involved in the regulation of intracellular pH, and the modulation of cardiac action potential. This Danio rerio (Zebrafish) protein is Anion exchange protein 3.